Reading from the N-terminus, the 487-residue chain is UDP-N-acetylmuramate--L-alanine ligase (487 aa).

Gly-122–Ser-128 is a binding site for ATP.

The protein belongs to the MurCDEF family.

The protein localises to the cytoplasm. The catalysed reaction is UDP-N-acetyl-alpha-D-muramate + L-alanine + ATP = UDP-N-acetyl-alpha-D-muramoyl-L-alanine + ADP + phosphate + H(+). Its pathway is cell wall biogenesis; peptidoglycan biosynthesis. Its function is as follows. Cell wall formation. In Corynebacterium urealyticum (strain ATCC 43042 / DSM 7109), this protein is UDP-N-acetylmuramate--L-alanine ligase.